A 209-amino-acid polypeptide reads, in one-letter code: Orotate phosphoribosyltransferase (209 aa).

5-phospho-alpha-D-ribose 1-diphosphate-binding positions include R96, K100, H102, and 122–130 (EDLISTGGS). S126 contributes to the orotate binding site.

Belongs to the purine/pyrimidine phosphoribosyltransferase family. PyrE subfamily. Homodimer. Mg(2+) is required as a cofactor.

The enzyme catalyses orotidine 5'-phosphate + diphosphate = orotate + 5-phospho-alpha-D-ribose 1-diphosphate. The protein operates within pyrimidine metabolism; UMP biosynthesis via de novo pathway; UMP from orotate: step 1/2. In terms of biological role, catalyzes the transfer of a ribosyl phosphate group from 5-phosphoribose 1-diphosphate to orotate, leading to the formation of orotidine monophosphate (OMP). This chain is Orotate phosphoribosyltransferase, found in Streptococcus thermophilus (strain ATCC BAA-491 / LMD-9).